The chain runs to 185 residues: Small ribosomal subunit protein uS5 (185 aa).

The region spanning 18–81 (FVDKLVHINR…ESAKRALIRV (64 aa)) is the S5 DRBM domain. A disordered region spans residues 157–185 (SPRSVAARRGIKVSQLQSRRRVEDAEATD). A compositionally biased stretch (basic and acidic residues) spans 176-185 (RRVEDAEATD).

The protein belongs to the universal ribosomal protein uS5 family. As to quaternary structure, part of the 30S ribosomal subunit. Contacts proteins S4 and S8.

In terms of biological role, with S4 and S12 plays an important role in translational accuracy. Located at the back of the 30S subunit body where it stabilizes the conformation of the head with respect to the body. The protein is Small ribosomal subunit protein uS5 of Xanthobacter autotrophicus (strain ATCC BAA-1158 / Py2).